The sequence spans 230 residues: Orotidine 5'-phosphate decarboxylase (230 aa).

Residues Asp8, Lys30, 59–68 (DLKLYDIPNT), Thr118, Arg178, Gln187, Gly207, and Arg208 each bind substrate. Catalysis depends on Lys61, which acts as the Proton donor.

It belongs to the OMP decarboxylase family. Type 1 subfamily. Homodimer.

It carries out the reaction orotidine 5'-phosphate + H(+) = UMP + CO2. It participates in pyrimidine metabolism; UMP biosynthesis via de novo pathway; UMP from orotate: step 2/2. Functionally, catalyzes the decarboxylation of orotidine 5'-monophosphate (OMP) to uridine 5'-monophosphate (UMP). The sequence is that of Orotidine 5'-phosphate decarboxylase from Sulfurovum sp. (strain NBC37-1).